Here is a 195-residue protein sequence, read N- to C-terminus: Protein GrpE (195 aa).

This sequence belongs to the GrpE family. Homodimer.

Its subcellular location is the cytoplasm. In terms of biological role, participates actively in the response to hyperosmotic and heat shock by preventing the aggregation of stress-denatured proteins, in association with DnaK and GrpE. It is the nucleotide exchange factor for DnaK and may function as a thermosensor. Unfolded proteins bind initially to DnaJ; upon interaction with the DnaJ-bound protein, DnaK hydrolyzes its bound ATP, resulting in the formation of a stable complex. GrpE releases ADP from DnaK; ATP binding to DnaK triggers the release of the substrate protein, thus completing the reaction cycle. Several rounds of ATP-dependent interactions between DnaJ, DnaK and GrpE are required for fully efficient folding. The chain is Protein GrpE from Francisella tularensis subsp. novicida (strain U112).